The primary structure comprises 394 residues: uncharacterized protein (394 aa).

2 helical membrane passes run 31–51 and 57–77; these read LAIL…LSGL and LIIA…SLLI.

This sequence belongs to the chlamydial CPn_0129/CT_036/TC_0306 family.

Its subcellular location is the cell membrane. This is an uncharacterized protein from Chlamydia pneumoniae (Chlamydophila pneumoniae).